The chain runs to 273 residues: Putative pyruvate, phosphate dikinase regulatory protein 2 (273 aa).

151 to 158 (GVSRTSKT) contributes to the ADP binding site.

This sequence belongs to the pyruvate, phosphate/water dikinase regulatory protein family. PDRP subfamily.

The enzyme catalyses N(tele)-phospho-L-histidyl/L-threonyl-[pyruvate, phosphate dikinase] + ADP = N(tele)-phospho-L-histidyl/O-phospho-L-threonyl-[pyruvate, phosphate dikinase] + AMP + H(+). It catalyses the reaction N(tele)-phospho-L-histidyl/O-phospho-L-threonyl-[pyruvate, phosphate dikinase] + phosphate + H(+) = N(tele)-phospho-L-histidyl/L-threonyl-[pyruvate, phosphate dikinase] + diphosphate. Functionally, bifunctional serine/threonine kinase and phosphorylase involved in the regulation of the pyruvate, phosphate dikinase (PPDK) by catalyzing its phosphorylation/dephosphorylation. The protein is Putative pyruvate, phosphate dikinase regulatory protein 2 of Syntrophomonas wolfei subsp. wolfei (strain DSM 2245B / Goettingen).